The chain runs to 729 residues: Serine/threonine-protein kinase TBK1 (729 aa).

A Protein kinase domain is found at 9–310 (WLLSDILGQG…ETSDILHRMV (302 aa)). 15–23 (LGQGATANV) serves as a coordination point for ATP. Residue lysine 30 forms a Glycyl lysine isopeptide (Lys-Gly) (interchain with G-Cter in ubiquitin) linkage. Lysine 38 lines the ATP pocket. Aspartate 135 (proton acceptor) is an active-site residue. Serine 172 carries the post-translational modification Phosphoserine; by autocatalysis and IKKB. Residues 309 to 385 (MVIHVFSLQQ…ENPIFVVSRE (77 aa)) enclose the Ubiquitin-like domain. A Glycyl lysine isopeptide (Lys-Gly) (interchain with G-Cter in ubiquitin) cross-link involves residue lysine 401. Coiled-coil stretches lie at residues 407-657 (DLDG…LQET) and 658-713 (LPQK…ILER). Position 607 is an N6-methyllysine; by SETD4 (lysine 607). The tract at residues 621–729 (RKMLHLRKQL…DGGLRNVDCL (109 aa)) is interaction with AZI2, TANK and TBKBP1. Lysine 670 participates in a covalent cross-link: Glycyl lysine isopeptide (Lys-Gly) (interchain with G-Cter in ubiquitin). Residue serine 716 is modified to Phosphoserine.

This sequence belongs to the protein kinase superfamily. Ser/Thr protein kinase family. I-kappa-B kinase subfamily. Homodimer. Interacts with DDX3X, TIRAP and TRAF2. Part of a ternary complex consisting of TANK, TRAF2 and TBK1. Interacts with AZI2, TANK and TBKBP1; these interactions are mutually exclusive and mediate TBK1 activation. Interacts with GSK3B; this interaction promotes TBK1 self-association and autophosphorylation. Interacts with SIKE1; SIKE1 is associated with TBK1 under physiological condition and dissociated from TBK1 upon viral infection or TLR3 stimulation. Interacts with IRF3, leading to IRF3 phosphorylation. Interacts with RIGI. Interacts with CYLD. Interacts with OPTN and TRAF3. Interacts with SRC. Interacts with the exocyst complex subunit SEC5/EXOC2; this interaction is sufficient to trigger TBK1 activity. Interacts with STING1, leading to STING1 phosphorylation. Interacts with IFIT3 (via N-terminus). Interacts with MAVS; interaction only takes place in the presence of IFIT3 and leads to MAVS phosphorylation. Interacts (via protein kinase domain) with TTLL12 (via TTL domain); the interaction prevents MAVS binding to TBK1. Interacts with TICAM1; this interaction is enhanced in the presence of WDFY1 and leads to TICAM1 phosphorylation. Interacts with TRIM26. Interacts with TRIM23. Interacts with TTC4 and IKBKE. Interacts with HNRNPA2B1. Interacts with DDX3X. Interacts with TRIM14. Interacts with CEP170; efficient complex formation may be dependent on the presence of CCDC61. Interacts with TRAF3IP3. Interacts with HSP90AA1; the interaction mediates TBK1 association with TOMM70. Interacts with TAX1BP1. Interacts with kinase IKBKB; the complex interacts with STAT1, leading to phosphorylation of STAT1 on 'Thr-749' by IKBKB. Interacts with ICOS; this interaction is critical for the maturation of T follicular regulatory cells. Interacts with RNF144B; this interaction prevents TBK1 phosphorylation and subsequent activation. Interacts with ASB8; this interaction promotes TBK1 proteasomal degradation. Forms a ternary complex with ZNF268 and SETD4; the interaction with SETD4 is ZNF268-dependent and leads to TBK1 monomethylation, which enhances its interaction with IRF3 and MAVS. In terms of assembly, (Microbial infection) Interacts with Borna disease virus (BDV) P protein leading to its phosphorylation. As to quaternary structure, (Microbial infection) Interacts with Ebola virus protein VP35. (Microbial infection) Interacts with HCV NS3; this interaction leads to inhibition of cellular antiviral response by blocking necessary interactions between the TBK1 and its substrates IRF3 and IRF7. In terms of assembly, (Microbial infection) Interacts with human herpesvirus 1 protein ICP34.5. As to quaternary structure, (Microbial infection) Interacts with Zika virus non-structural protein 1/NS1 and non-structural protein 4B/NS4B. (Microbial infection) Interacts with SARS-CoV-2 non-structural protein 6; this interaction decreases IRF3 phosphorylation by 57%, which leads to reduced IFN-beta (IFNB) production. Interacts with SARS-CoV-2 helicase; this interaction inhibits TBK1 phosphorylation and decreases IRF3 phosphorylation by 75%, which leads to reduced IFN-beta production. Interacts with SARS-CoV-2 M protein; the interaction promotes TBK1 degradation via 'Lys-48'-linked ubiquitination. In terms of assembly, (Microbial infection) Interacts with human cytomegalovirus protein UL35; this interaction inhibits type I interferon production. As to quaternary structure, (Microbial infection) Interacts with heartland virus NSs; this interaction antagonizes TBK1 phosphorylation and inhibits TBK1-IRF3 interaction and thus the establishment of an antiviral state. (Microbial infection) Interacts (via N-terminus) with Severe fever with thrombocytopenia virus (SFTSV) NSs; this interaction antagonizes TBK1 phosphorylation and sequesters TBK1 in NSs-induced cytoplasmic inclusion bodies thereby inhibiting the IFN responses. Post-translationally, autophosphorylation at Ser-172 activates the kinase, and is an essential step for virus-triggered signaling. Phosphorylated by IKBKB/IKKB at Ser-172. Phosphorylation requires homodimerization and ubiquitination at Lys-30 and Lys-401. Dephosphorylated at Ser-172 by PPM1B and this negatively regulates its role in mediating antiviral response. In terms of processing, 'Lys-63'-linked polyubiquitination by MIB1 after RNA virus infection, or by NRDP1 after LPS stimulation at Lys-30 and Lys-401, participates in kinase activation. 'Lys-48'-linked polyubiquitination at Lys-670 by DTX4 leads to proteasomal degradation. 'Lys-48'-linked polyubiquitination by TRAIP also leads to proteasomal degradation. 'Lys-48'-linked polyubiquitination by TRAF7; leading to proteasomal degradation. 'Lys-63'-linked polyubiquitination by RNF128 at Lys-30 and Lys-401 leads to the activation of antiviral responses. 'Lys-48'-linked polyubiquitination after 'lys-33'-linked deubiquitination by USP38 promotes TBK1 degradation. (Microbial infection) Interaction with SARS-CoV-2 M protein induces 'Lys-48'-linked ubiquitination which leads to proteasomal degradation. Post-translationally, (Microbial infection) Deubiquitinated by Epstein-Barr virus BPLF1 on both 'Lys-48' and 'Lys-63'-linked ubiquitin chains; leading to inhibition of type I interfewron production. In terms of processing, monomethylation at Lys-607 by SETD4 maximizes TBK1 activation and promotes efficient interferon signaling. In terms of tissue distribution, ubiquitous with higher expression in testis. Expressed in the ganglion cells, nerve fiber layer and microvasculature of the retina.

It is found in the cytoplasm. The catalysed reaction is L-seryl-[protein] + ATP = O-phospho-L-seryl-[protein] + ADP + H(+). It carries out the reaction L-threonyl-[protein] + ATP = O-phospho-L-threonyl-[protein] + ADP + H(+). In terms of biological role, serine/threonine kinase that plays an essential role in regulating inflammatory responses to foreign agents. Following activation of toll-like receptors by viral or bacterial components, associates with TRAF3 and TANK and phosphorylates interferon regulatory factors (IRFs) IRF3 and IRF7 as well as DDX3X. This activity allows subsequent homodimerization and nuclear translocation of the IRFs leading to transcriptional activation of pro-inflammatory and antiviral genes including IFNA and IFNB. In order to establish such an antiviral state, TBK1 form several different complexes whose composition depends on the type of cell and cellular stimuli. Plays a key role in IRF3 activation: acts by first phosphorylating innate adapter proteins MAVS, STING1 and TICAM1 on their pLxIS motif, leading to recruitment of IRF3, thereby licensing IRF3 for phosphorylation by TBK1. Phosphorylated IRF3 dissociates from the adapter proteins, dimerizes, and then enters the nucleus to induce expression of interferons. Thus, several scaffolding molecules including FADD, TRADD, MAVS, AZI2, TANK or TBKBP1/SINTBAD can be recruited to the TBK1-containing-complexes. Under particular conditions, functions as a NF-kappa-B effector by phosphorylating NF-kappa-B inhibitor alpha/NFKBIA, IKBKB or RELA to translocate NF-Kappa-B to the nucleus. Restricts bacterial proliferation by phosphorylating the autophagy receptor OPTN/Optineurin on 'Ser-177', thus enhancing LC3 binding affinity and antibacterial autophagy. Phosphorylates SMCR8 component of the C9orf72-SMCR8 complex, promoting autophagosome maturation. Phosphorylates ATG8 proteins MAP1LC3C and GABARAPL2, thereby preventing their delipidation and premature removal from nascent autophagosomes. Seems to play a role in energy balance regulation by sustaining a state of chronic, low-grade inflammation in obesity, which leads to a negative impact on insulin sensitivity. Attenuates retroviral budding by phosphorylating the endosomal sorting complex required for transport-I (ESCRT-I) subunit VPS37C. Phosphorylates Borna disease virus (BDV) P protein. Plays an essential role in the TLR3- and IFN-dependent control of herpes virus HSV-1 and HSV-2 infections in the central nervous system. Acts both as a positive and negative regulator of the mTORC1 complex, depending on the context: activates mTORC1 in response to growth factors by catalyzing phosphorylation of MTOR, while it limits the mTORC1 complex by promoting phosphorylation of RPTOR. Acts as a positive regulator of the mTORC2 complex by mediating phosphorylation of MTOR, leading to increased phosphorylation and activation of AKT1. Phosphorylates and activates AKT1. Involved in the regulation of TNF-induced RIPK1-mediated cell death, probably acting via CYLD phosphorylation that in turn controls RIPK1 ubiquitination status. Also participates in the differentiation of T follicular regulatory cells together with the receptor ICOS. The chain is Serine/threonine-protein kinase TBK1 from Homo sapiens (Human).